Here is a 94-residue protein sequence, read N- to C-terminus: Co-chaperonin GroES (94 aa).

It belongs to the GroES chaperonin family. In terms of assembly, heptamer of 7 subunits arranged in a ring. Interacts with the chaperonin GroEL.

The protein resides in the cytoplasm. Together with the chaperonin GroEL, plays an essential role in assisting protein folding. The GroEL-GroES system forms a nano-cage that allows encapsulation of the non-native substrate proteins and provides a physical environment optimized to promote and accelerate protein folding. GroES binds to the apical surface of the GroEL ring, thereby capping the opening of the GroEL channel. The protein is Co-chaperonin GroES of Streptococcus oralis.